Reading from the N-terminus, the 512-residue chain is MEELKGYLEKSRSKQQHFLYPLLFQEYIFVLAHDHGLNVNGSIFYEPAEISGYDKKFSSLLVKRLITRMYQQNYLINSVNDSNQNRFVGHNKNFDSQMISEGFAVIVEIPFSLRLVSSLEEKKEIQKSQNLRSIHSIFPFFEDKLSHLICVLDILIPYPVHLEILVQILQCWIQDVPSLHLLRFFFHEYNNWSNLITPKKSNYYGFSKENPRLFLFLYNSYVVECESIFVFLRKQSSYLRSTSSGTFLERTHFHEKIEQHLVVLCCNDFQKTLWLFKDPFMHYVRYQGKSILASKGTRFLMKKWKSYFVNFWQCHFHFWSQSCRIHINQFPNFSLHFLGYLSSVPINPSAVKSQMLENSFLIDTVTKKFETLVPIISMIGSLSKAKFCNVSGNPISKPVWADLSDSDIIDRFGRICRNLSHYYSGSSKKQSLYRIKYILRLSCARTLARKHKSTVRAFLQRLGSEFLEEFFTEEEKVLSLILPRISYPLHKLYRERIWYLDIIRINDLVNHL.

It belongs to the intron maturase 2 family. MatK subfamily.

The protein localises to the plastid. The protein resides in the chloroplast. Its function is as follows. Usually encoded in the trnK tRNA gene intron. Probably assists in splicing its own and other chloroplast group II introns. This is Maturase K from Filarum manserichense.